A 1958-amino-acid chain; its full sequence is Sodium channel protein type 10 subunit alpha (1958 aa).

Residues 1–125 (MEFPFGSVGT…FNLIRRTAIK (125 aa)) are Cytoplasmic-facing. Positions 27–54 (QIAAHRAAKKGRPKQRGQKDKSEKPRPQ) are disordered. Basic residues predominate over residues 32-42 (RAAKKGRPKQR). Positions 43 to 54 (GQKDKSEKPRPQ) are enriched in basic and acidic residues. Residues 116-404 (FNLIRRTAIK…VTMAYEEQSQ (289 aa)) form an I repeat. A helical transmembrane segment spans residues 126–149 (VSVHSWFSIFITVTILVNCVCMTR). Topologically, residues 150–154 (TDLPE) are extracellular. A helical transmembrane segment spans residues 155–174 (KLEYAFTVVYTFEALIKILA). Topologically, residues 175–187 (RGFCLNEFTYLRD) are cytoplasmic. Residues 188–206 (PWNWLDFSVITLAYVGAAI) traverse the membrane as a helical segment. Residues 207–212 (DLRGIS) lie on the Extracellular side of the membrane. The helical; Voltage-sensor transmembrane segment at 213-232 (GLRTFRVLRALKTVSVIPGL) threads the bilayer. Residues 233-248 (KVIVGALIHSVRKLAD) lie on the Cytoplasmic side of the membrane. Residues 249 to 272 (VTILTVFCLSVFALVGLQLFKGNL) form a helical membrane-spanning segment. Residues 273-340 (KNKCIKNGTD…PDFNYTSFDS (68 aa)) are Extracellular-facing. Cysteine 276 and cysteine 318 are joined by a disulfide. N-linked (GlcNAc...) asparagine glycans are attached at residues asparagine 279, asparagine 288, asparagine 311, and asparagine 334. The segment at residues 341–365 (FAWAFLSLFRLMTQDSWERLYQQTL) is an intramembrane region (pore-forming). The Extracellular segment spans residues 366-372 (RASGKMY). Residues 373–398 (MVFFVLVIFLGSFYLVNLILAVVTMA) form a helical membrane-spanning segment. The Cytoplasmic segment spans residues 399–658 (YEEQSQATIA…KWKKFKMVLF (260 aa)). Phosphoserine occurs at positions 440, 443, 466, and 478. Disordered regions lie at residues 444–483 (HNGS…PYNQ) and 539–583 (GRGA…APEG). Pro residues predominate over residues 549–560 (PRSPLPQSPNPG). 2 positions are modified to phosphoserine: serine 611 and serine 614. The stretch at 646–910 (CCPKWKKFKM…EDDGEVNNLQ (265 aa)) is one II repeat. The helical transmembrane segment at 659-683 (ELVTDPFAELTITLCIVVNTVFMAM) threads the bilayer. Residues 684-694 (EHYPMTDAFDA) lie on the Extracellular side of the membrane. A helical transmembrane segment spans residues 695–718 (MLQAGNIVFTVFFTMEMAFKIIAF). Residues 719–726 (DPYYYFQK) lie on the Cytoplasmic side of the membrane. The chain crosses the membrane as a helical span at residues 727-746 (KWNIFDCVIVTVSLLELSTS). Residues 747–752 (KKGSLS) are Extracellular-facing. A helical; Voltage-sensor transmembrane segment spans residues 753-772 (VLRTFRLLRVFKLAKSWPTL). Topologically, residues 773 to 788 (NMLIKIIGNSVGALGN) are cytoplasmic. A helical membrane pass occupies residues 789 to 809 (LTFILAIIVFIFALVGKQLLS). Topologically, residues 810 to 833 (ENYGCRRDGISVWNGERLRWHMCD) are extracellular. Residues 834–854 (FFHSFLVVFRILCGEWIENMW) constitute an intramembrane region (pore-forming). At 855-863 (VCMEVSQDY) the chain is on the extracellular side. Cysteine 856 and cysteine 865 are disulfide-bonded. A helical transmembrane segment spans residues 864–889 (ICLTLFLTVMVLGNLVVLNLFIALLL). The Cytoplasmic portion of the chain corresponds to 890–1148 (NSFSADNLTA…GWQVRKTCYR (259 aa)). A disordered region spans residues 1006-1094 (DLDELEEDVE…SEGSTVDCPD (89 aa)). The span at 1017-1038 (ASQSSWQEESPKGQQELLQQVQ) shows a compositional bias: polar residues. The III repeat unit spans residues 1141–1450 (QVRKTCYRIV…KKYYNAMKKL (310 aa)). Residues 1149-1172 (IVEHSWFESFIIFMILLSSGALAF) traverse the membrane as a helical segment. The Extracellular segment spans residues 1173 to 1185 (EDNYLEEKPRVKS). The helical transmembrane segment at 1186–1211 (VLEYTDRVFTFIFVFEMLLKWVAYGF) threads the bilayer. Residues 1212–1217 (KKYFTN) are Cytoplasmic-facing. Residues 1218–1239 (AWCWLDFLIVNISLTSLIAKIL) form a helical membrane-spanning segment. Residues 1240–1243 (EYSD) are Extracellular-facing. A helical; Voltage-sensor transmembrane segment spans residues 1244-1265 (VASIKALRTLRALRPLRALSRF). The Cytoplasmic portion of the chain corresponds to 1266–1284 (EGMRVVVDALVGAIPSIMN). The chain crosses the membrane as a helical span at residues 1285–1312 (VLLVCLIFWLIFSIMGVNLFAGKFSRCV). Residues 1313 to 1354 (DTRSNPFSVVNSTFVTNKSDCYNQNNTGHFFWVNVKVNFDNV) are Extracellular-facing. N-linked (GlcNAc...) asparagine glycans are attached at residues asparagine 1323, asparagine 1329, and asparagine 1337. The pore-forming intramembrane region spans 1355–1376 (AMGYLALLQVATFKGWMDIMYA). At 1377–1392 (AVDSRDINSQPNWEES) the chain is on the extracellular side. Residues 1393–1419 (LYMYLYFVVFIIFGGFFTLNLFVGVII) traverse the membrane as a helical segment. At 1420–1472 (DNFNQQKKKLGGQDIFMTEEQKKYYNAMKKLGSKKPQKPIPRPLNKYQGFVFD) the chain is on the cytoplasmic side. Serine 1452 is subject to Phosphoserine; by PKC. The stretch at 1459 to 1758 (IPRPLNKYQG…WEKFDPEATQ (300 aa)) is one IV repeat. The helical transmembrane segment at 1473–1496 (IVTRQAFDIIIMALICLNMITMMV) threads the bilayer. The Extracellular portion of the chain corresponds to 1497–1507 (ETDNQSEEKTK). N-linked (GlcNAc...) asparagine glycosylation is present at asparagine 1500. Residues 1508–1531 (VLGRINQFFVAVFTGECVMKMFAL) traverse the membrane as a helical segment. Topologically, residues 1532-1537 (RQYYFT) are cytoplasmic. The helical transmembrane segment at 1538 to 1561 (NGWNVFDFIVVILSISSLLFSAIL) threads the bilayer. The Extracellular segment spans residues 1562-1573 (SSLESYFSPTLL). The chain crosses the membrane as a helical; Voltage-sensor span at residues 1574–1595 (RVIRLARIGRILRLIRAAKGIR). Topologically, residues 1596–1610 (TLLFALMMSLPALFN) are cytoplasmic. The chain crosses the membrane as a helical span at residues 1611-1633 (IGLLLFLVMFIYSIFGMASFANV). Topologically, residues 1634–1647 (IDEAGIDDMFNFKT) are extracellular. Residues 1648–1670 (FGNSMLCLFQITTSAGWDGLLSP) constitute an intramembrane region (pore-forming). At 1671–1698 (ILNTGPPYCDPNRPNSNGSKGNCGSPAV) the chain is on the extracellular side. N-linked (GlcNAc...) asparagine glycosylation occurs at asparagine 1687. Residues 1699-1723 (GILFFTTYIIISFLIVVNMYIAVIL) traverse the membrane as a helical segment. Topologically, residues 1724–1958 (ENFNVATEES…AKEGKSPGPQ (235 aa)) are cytoplasmic. Positions 1852–1881 (EDISATIIQKAYRNYMLQRSLMLSNPLHVP) constitute an IQ domain. Residues 1901-1958 (NDNGGLPDKSETASATSFPPSYDSVTRGLSDRANISTSSSMQNEDEVTAKEGKSPGPQ) are disordered. Residues 1933-1942 (ANISTSSSMQ) show a composition bias toward polar residues. Over residues 1947 to 1958 (VTAKEGKSPGPQ) the composition is skewed to basic and acidic residues.

It belongs to the sodium channel (TC 1.A.1.10) family. Nav1.8/SCN10A subfamily. As to quaternary structure, the channel consists of an ion conducting pore forming alpha-subunit regulated by one or more associated auxiliary subunits SCN1B, SCN2B and SCN3B; electrophysiological properties may vary depending on the type of the associated beta subunits. Found in a number of complexes with PRX, DYNLT1 and PDZD2. Interacts with proteins such as FSTL1, PRX, DYNLT1, PDZD2, S100A10 and many others. Interacts with NEDD4 and NEDD4L. Ubiquitinated by NEDD4L; which promotes its endocytosis. In terms of processing, phosphorylation at Ser-1452 by PKC in a highly conserved cytoplasmic loop slows inactivation of the sodium channel and reduces peak sodium currents. Post-translationally, lacks the cysteine which covalently binds the conotoxin GVIIJ. This cysteine (position 815) is speculated in other sodium channel subunits alpha to be implied in covalent binding with the sodium channel subunit beta-2 or beta-4. As to expression, expressed in dorsal root ganglion and trigeminal ganglion.

It is found in the cell membrane. It catalyses the reaction Na(+)(in) = Na(+)(out). Tetrodotoxin-resistant channel that mediates the voltage-dependent sodium ion permeability of excitable membranes. Assuming opened or closed conformations in response to the voltage difference across the membrane, the protein forms a sodium-selective channel through which sodium ions may pass in accordance with their electrochemical gradient. Plays a role in neuropathic pain mechanisms. This Mus musculus (Mouse) protein is Sodium channel protein type 10 subunit alpha.